The chain runs to 152 residues: UPF0266 membrane protein CKO_01158 (152 aa).

3 consecutive transmembrane segments (helical) span residues 6-26, 45-65, and 67-87; these read LVLVLFIVALLAYAIYDQFIM, VDSVIFVGLVAILIYNNVTSH, and AQITTWLLCALALMGFYIFWV.

Belongs to the UPF0266 family.

It is found in the cell inner membrane. The sequence is that of UPF0266 membrane protein CKO_01158 from Citrobacter koseri (strain ATCC BAA-895 / CDC 4225-83 / SGSC4696).